The primary structure comprises 286 residues: Probable biotin transporter (286 aa).

EamA domains follow at residues 3–128 (YLLF…AIIR) and 139–277 (GFLL…LWVN). 10 helical membrane passes run 4–24 (LLFVTVLWAFSFNLIGEYLAG), 26–46 (VDSYFAVLTRVLLAGLVFLPL), 56–76 (FVGGVMLVGALQFGITYVCLY), 81–101 (VLTVPEVLLFTVLTPVHVALF), 109–129 (FNFWALAAALVAVLGAAIIRY), 136–156 (FLQGFLLLQLANATFAAGQVL), 174–194 (FGYFFVGALLVALPAWLLFGD), 203–223 (LQWGVLVWMGLLATALGQFWW), 234–254 (TLAVMNNLHVPVGLLLNLLIW), and 258–280 (ADLPRLALGGAVIVASLWVNRLG).

This sequence belongs to the drug/metabolite transporter (DMT) superfamily. 10 TMS drug/metabolite exporter (DME) (TC 2.A.7.3) family.

It is found in the cell inner membrane. The catalysed reaction is biotin(in) = biotin(out). Functionally, uptake of biotin. This Pseudomonas aeruginosa (strain ATCC 15692 / DSM 22644 / CIP 104116 / JCM 14847 / LMG 12228 / 1C / PRS 101 / PAO1) protein is Probable biotin transporter.